We begin with the raw amino-acid sequence, 303 residues long: D-alanine--D-alanine ligase B (303 aa).

Residues 103–298 (KLLWKGAGLP…YEDLCLKVLD (196 aa)) form the ATP-grasp domain. Position 129-184 (129-184 (ERQLGLPIFVKPSTEGSSIGVTKVKQPGELRAAFEEARKYDKVVIAEQFIGGGEYT)) interacts with ATP. Positions 252, 265, and 267 each coordinate Mg(2+).

This sequence belongs to the D-alanine--D-alanine ligase family. Requires Mg(2+) as cofactor. It depends on Mn(2+) as a cofactor.

The protein resides in the cytoplasm. The catalysed reaction is 2 D-alanine + ATP = D-alanyl-D-alanine + ADP + phosphate + H(+). It participates in cell wall biogenesis; peptidoglycan biosynthesis. Functionally, cell wall formation. This Chromobacterium violaceum (strain ATCC 12472 / DSM 30191 / JCM 1249 / CCUG 213 / NBRC 12614 / NCIMB 9131 / NCTC 9757 / MK) protein is D-alanine--D-alanine ligase B.